The chain runs to 307 residues: 2-dehydropantoate 2-reductase (307 aa).

NADP(+)-binding positions include 7–12 (GSGAMG), Asn-102, and Ala-128. Asn-102 serves as a coordination point for substrate. The Proton donor role is filled by Lys-184. Substrate is bound by residues Asn-188, Asn-192, and Ser-255. Glu-268 contributes to the NADP(+) binding site.

The protein belongs to the ketopantoate reductase family.

The protein resides in the cytoplasm. It catalyses the reaction (R)-pantoate + NADP(+) = 2-dehydropantoate + NADPH + H(+). It participates in cofactor biosynthesis; (R)-pantothenate biosynthesis; (R)-pantoate from 3-methyl-2-oxobutanoate: step 2/2. Its function is as follows. Catalyzes the NADPH-dependent reduction of ketopantoate into pantoic acid. The polypeptide is 2-dehydropantoate 2-reductase (apbA) (Streptococcus pyogenes serotype M1).